A 438-amino-acid polypeptide reads, in one-letter code: MPYFPGVEKVRFEGPSSDAPLAFRHYDANKIILGKPMREHLRMAACYWHTFVWPGADMFGVGTFKRPWQRSGDPMELAIGKADAAFEFFSKLGIDYYSFHDTDVAPEGSSLKEYRHHFAQMVDHLERHQEQTGIKLLWGTANCFSNPRFAAGAASNPDPEVFAYAAAQVFSAMNATLRLKGANYVLWGGREGYETLLNTDLKREREQLGRFMRMVVEHKHKIGFKGDLLIEPKPQEPTKHQYDYDSATVFGFLHEYGLEHEIKVNIEANHATLAGHSFHHEIATAVSLGIFGSIDANRGDPQNGWDTDQFPNSVEEMTLATYEILKAGGFKNGGYNFDSKVRRQSLDDVDLFHGHVAAMDVLALALERAAAMVQNDRLQQFKDQRYAGWQQPLGQAVLAGEFSLASLAEHAFAHELNPQAVSGRQEMLEGVVNRFIYT.

Mg(2+) contacts are provided by D306 and D308.

It belongs to the xylose isomerase family. Homotetramer. Mg(2+) serves as cofactor.

Its subcellular location is the cytoplasm. It carries out the reaction alpha-D-xylose = alpha-D-xylulofuranose. The sequence is that of Xylose isomerase from Pseudomonas fluorescens (strain SBW25).